The chain runs to 214 residues: Large ribosomal subunit protein uL4c (214 aa).

The disordered stretch occupies residues 43-80 (KQSNEKRQGSANTKTRSEVRGGGRKPWRQKGTGRARAG). Positions 64-75 (GGRKPWRQKGTG) are enriched in basic residues.

The protein belongs to the universal ribosomal protein uL4 family. As to quaternary structure, part of the 50S ribosomal subunit.

Its subcellular location is the plastid. The protein resides in the chloroplast. Functionally, probably binds the 23S rRNA. The polypeptide is Large ribosomal subunit protein uL4c (rpl4) (Porphyra purpurea (Red seaweed)).